Consider the following 177-residue polypeptide: Probable nicotinate-nucleotide adenylyltransferase (177 aa).

Belongs to the NadD family.

The enzyme catalyses nicotinate beta-D-ribonucleotide + ATP + H(+) = deamido-NAD(+) + diphosphate. The protein operates within cofactor biosynthesis; NAD(+) biosynthesis; deamido-NAD(+) from nicotinate D-ribonucleotide: step 1/1. Its function is as follows. Catalyzes the reversible adenylation of nicotinate mononucleotide (NaMN) to nicotinic acid adenine dinucleotide (NaAD). This chain is Probable nicotinate-nucleotide adenylyltransferase, found in Nitratiruptor sp. (strain SB155-2).